The chain runs to 45 residues: Cytochrome b559 subunit beta (45 aa).

Threonine 2 is subject to N-acetylthreonine. At 2 to 17 the chain is on the cytoplasmic side; it reads TSNTPNQEPVSYPIFT. Residues 18-42 form a helical membrane-spanning segment; that stretch reads VRWVAVHTLAVPTIFFLGAIAAMQF. Residue histidine 24 participates in heme binding. The Lumenal segment spans residues 43–45; it reads IQR.

As to quaternary structure, heterodimer of an alpha subunit and a beta subunit. PSII is composed of 1 copy each of membrane proteins PsbA, PsbB, PsbC, PsbD, PsbE, PsbF, PsbH, PsbI, PsbJ, PsbK, PsbL, PsbM, PsbT, PsbX, PsbY, PsbZ, Psb30/Ycf12, peripheral proteins PsbO, CyanoQ (PsbQ), PsbU, PsbV and a large number of cofactors. It forms dimeric complexes. Part of a photosystem II (PSII) assembly intermediate complex PSII-I; crystallized from a strain deleted of psbJ, it forms monomeric PSII before addition of the oxygen evolving complex. PSII-I includes 3 assembly factors not found in mature PSII (Psb27, Psb28 and Psb34). The cofactor is heme b.

It localises to the cellular thylakoid membrane. Its function is as follows. This b-type cytochrome is tightly associated with the reaction center of photosystem II (PSII). PSII is a light-driven water:plastoquinone oxidoreductase that uses light energy to abstract electrons from H(2)O, generating O(2) and a proton gradient subsequently used for ATP formation. It consists of a core antenna complex that captures photons, and an electron transfer chain that converts photonic excitation into a charge separation. The polypeptide is Cytochrome b559 subunit beta (Thermosynechococcus vestitus (strain NIES-2133 / IAM M-273 / BP-1)).